We begin with the raw amino-acid sequence, 105 residues long: Heat shock protein HspQ (105 aa).

Residues 74 to 105 (SSELQDERPEQPSMDELAQTIRKQRQAPRLRN) form a disordered region. The span at 95 to 105 (RKQRQAPRLRN) shows a compositional bias: basic residues.

It belongs to the HspQ family.

It is found in the cytoplasm. Involved in the degradation of certain denaturated proteins, including DnaA, during heat shock stress. This is Heat shock protein HspQ from Shigella dysenteriae serotype 1 (strain Sd197).